The primary structure comprises 71 residues: UPF0337 protein RPA4418 (71 aa).

A disordered region spans residues 1-54 (MGSTMDKIKGQANELAGKAKQGIGEATGSDKLKGEGAIQEAKGHGQQALGNAKD).

It belongs to the UPF0337 (CsbD) family.

This Rhodopseudomonas palustris (strain ATCC BAA-98 / CGA009) protein is UPF0337 protein RPA4418.